The primary structure comprises 202 residues: uncharacterized protein (202 aa).

This is an uncharacterized protein from Homo sapiens (Human).